The chain runs to 88 residues: MYLTKEIKEEIFAKHGEKTNTGKAEAQIALFTFRISHLTEHLKKNRHDYNTERSLVLLVGKRRSLLDYLKKKEINRYREIIKELGIRK.

This sequence belongs to the universal ribosomal protein uS15 family. Part of the 30S ribosomal subunit. Forms a bridge to the 50S subunit in the 70S ribosome, contacting the 23S rRNA.

Its function is as follows. One of the primary rRNA binding proteins, it binds directly to 16S rRNA where it helps nucleate assembly of the platform of the 30S subunit by binding and bridging several RNA helices of the 16S rRNA. In terms of biological role, forms an intersubunit bridge (bridge B4) with the 23S rRNA of the 50S subunit in the ribosome. The polypeptide is Small ribosomal subunit protein uS15 (Flavobacterium psychrophilum (strain ATCC 49511 / DSM 21280 / CIP 103535 / JIP02/86)).